Here is a 351-residue protein sequence, read N- to C-terminus: Methylthioribose-1-phosphate isomerase (351 aa).

Residues 51 to 53 (RGA), R94, and Q199 each bind substrate. D240 functions as the Proton donor in the catalytic mechanism. 250-251 (NK) provides a ligand contact to substrate.

The protein belongs to the EIF-2B alpha/beta/delta subunits family. MtnA subfamily. In terms of assembly, homodimer.

The catalysed reaction is 5-(methylsulfanyl)-alpha-D-ribose 1-phosphate = 5-(methylsulfanyl)-D-ribulose 1-phosphate. It participates in amino-acid biosynthesis; L-methionine biosynthesis via salvage pathway; L-methionine from S-methyl-5-thio-alpha-D-ribose 1-phosphate: step 1/6. In terms of biological role, catalyzes the interconversion of methylthioribose-1-phosphate (MTR-1-P) into methylthioribulose-1-phosphate (MTRu-1-P). In Bacillus cereus (strain ZK / E33L), this protein is Methylthioribose-1-phosphate isomerase.